A 156-amino-acid chain; its full sequence is Ribosomal RNA large subunit methyltransferase H (156 aa).

S-adenosyl-L-methionine is bound by residues Leu73, Gly104, and 123–128; that span reads LSSLTL.

This sequence belongs to the RNA methyltransferase RlmH family. Homodimer.

Its subcellular location is the cytoplasm. It carries out the reaction pseudouridine(1915) in 23S rRNA + S-adenosyl-L-methionine = N(3)-methylpseudouridine(1915) in 23S rRNA + S-adenosyl-L-homocysteine + H(+). In terms of biological role, specifically methylates the pseudouridine at position 1915 (m3Psi1915) in 23S rRNA. In Neisseria meningitidis serogroup C (strain 053442), this protein is Ribosomal RNA large subunit methyltransferase H.